A 483-amino-acid chain; its full sequence is Probable zinc metalloprotease PTRG_04977 (483 aa).

The N-terminal stretch at 1–18 is a signal peptide; that stretch reads MLFRSALLSNVLLLPACA. N-linked (GlcNAc...) asparagine glycans are attached at residues Asn-96 and Asn-121. Residues His-167, Asp-187, and Glu-220 each contribute to the Zn(2+) site. The N-linked (GlcNAc...) asparagine glycan is linked to Asn-235. Residue Asp-247 participates in Zn(2+) binding. N-linked (GlcNAc...) asparagine glycosylation is found at Asn-310, Asn-362, Asn-401, Asn-411, and Asn-421. One can recognise a Fibronectin type-III domain in the interval 396–483; the sequence is PAMPRNVTID…KSPAVYPFPG (88 aa).

The protein belongs to the peptidase M28 family. M28B subfamily. Zn(2+) is required as a cofactor.

The protein resides in the secreted. This chain is Probable zinc metalloprotease PTRG_04977, found in Pyrenophora tritici-repentis (strain Pt-1C-BFP) (Wheat tan spot fungus).